Reading from the N-terminus, the 226-residue chain is Protein DEHYDRATION-INDUCED 19 (226 aa).

Positions 158 to 208 (FPTSDTEETSKPPISIPDDASVIKETPAQPWDSSIDSSLTREEREQKRKQA) are disordered. Positions 196-205 (LTREEREQKR) are enriched in basic and acidic residues.

This sequence belongs to the Di19 family.

This chain is Protein DEHYDRATION-INDUCED 19 (DI19-1), found in Oryza sativa subsp. japonica (Rice).